The sequence spans 476 residues: Eukaryotic translation initiation factor 3 subunit L (476 aa).

Residues 257-452 (DAIRMFSHIL…DLDYALENDL (196 aa)) enclose the PCI domain.

Belongs to the eIF-3 subunit L family. In terms of assembly, component of the eukaryotic translation initiation factor 3 (eIF-3) complex.

The protein resides in the cytoplasm. In terms of biological role, component of the eukaryotic translation initiation factor 3 (eIF-3) complex, which is involved in protein synthesis of a specialized repertoire of mRNAs and, together with other initiation factors, stimulates binding of mRNA and methionyl-tRNAi to the 40S ribosome. The eIF-3 complex specifically targets and initiates translation of a subset of mRNAs involved in cell proliferation. This Aspergillus oryzae (strain ATCC 42149 / RIB 40) (Yellow koji mold) protein is Eukaryotic translation initiation factor 3 subunit L.